A 93-amino-acid chain; its full sequence is Phosphoribosyl-ATP pyrophosphatase (93 aa).

This sequence belongs to the PRA-PH family.

The protein resides in the cytoplasm. The enzyme catalyses 1-(5-phospho-beta-D-ribosyl)-ATP + H2O = 1-(5-phospho-beta-D-ribosyl)-5'-AMP + diphosphate + H(+). Its pathway is amino-acid biosynthesis; L-histidine biosynthesis; L-histidine from 5-phospho-alpha-D-ribose 1-diphosphate: step 2/9. This Mycolicibacterium gilvum (strain PYR-GCK) (Mycobacterium gilvum (strain PYR-GCK)) protein is Phosphoribosyl-ATP pyrophosphatase.